Here is a 353-residue protein sequence, read N- to C-terminus: tRNA N6-adenosine threonylcarbamoyltransferase (353 aa).

Fe cation is bound by residues histidine 109 and histidine 113. Residues 136–140 (TVSGG), aspartate 169, glycine 182, aspartate 186, and asparagine 284 each bind substrate. Aspartate 312 lines the Fe cation pocket.

Belongs to the KAE1 / TsaD family. It depends on Fe(2+) as a cofactor.

The protein resides in the cytoplasm. It carries out the reaction L-threonylcarbamoyladenylate + adenosine(37) in tRNA = N(6)-L-threonylcarbamoyladenosine(37) in tRNA + AMP + H(+). Its function is as follows. Required for the formation of a threonylcarbamoyl group on adenosine at position 37 (t(6)A37) in tRNAs that read codons beginning with adenine. Is involved in the transfer of the threonylcarbamoyl moiety of threonylcarbamoyl-AMP (TC-AMP) to the N6 group of A37, together with TsaE and TsaB. TsaD likely plays a direct catalytic role in this reaction. This chain is tRNA N6-adenosine threonylcarbamoyltransferase, found in Chlorobium limicola (strain DSM 245 / NBRC 103803 / 6330).